Here is a 495-residue protein sequence, read N- to C-terminus: Heat stress transcription factor A-1a (495 aa).

A DNA-binding region spans residues 50-144 (PPPFLSKTYD…LLKKISRRKS (95 aa)). Residues 140-164 (SRRKSVQGHGSSSSNPQSQQLSQGQ) form a disordered region. Residues 146 to 164 (QGHGSSSSNPQSQQLSQGQ) are compositionally biased toward low complexity. The interval 172 to 238 (SCVEVGKFGL…QIMSFLAKAV (67 aa)) is hydrophobic repeat HR-A/B. Residues 255–288 (NMHVTEANKKRRLREDSTAATESNSHSHSLEASD) form a disordered region. The short motif at 262–268 (NKKRRLR) is the Nuclear localization signal element. Polar residues predominate over residues 272–281 (TAATESNSHS). Residues 433–442 (FEFLEEYMPE) carry the AHA motif. A disordered region spans residues 445 to 477 (VFGDATTLENNNNNNNNNNNNNNNNNNNNTNGR). Residues 454 to 473 (NNNNNNNNNNNNNNNNNNNN) show a composition bias toward low complexity. The Nuclear export signal signature appears at 482–489 (LIEELGLL).

This sequence belongs to the HSF family. Class A subfamily. As to quaternary structure, homotrimer. Interacts with HSP70-1 and HSP70-4. Binds to CRK1. Binds to HSBP. Post-translationally, exhibits temperature-dependent phosphorylation. Phosphorylated by CRK1. Constitutively expressed.

The protein localises to the cytoplasm. It is found in the nucleus. Functionally, transcriptional activator that specifically binds DNA sequence 5'-AGAAnnTTCT-3' known as heat shock promoter elements (HSE). The polypeptide is Heat stress transcription factor A-1a (HSFA1A) (Arabidopsis thaliana (Mouse-ear cress)).